A 587-amino-acid polypeptide reads, in one-letter code: F-box/WD repeat-containing protein sel-10 (587 aa).

A compositionally biased stretch (basic and acidic residues) spans 1–11; it reads MWPRNDVHMDD. Positions 1–53 are disordered; it reads MWPRNDVHMDDGSMTPEDQEPVTDNDMEYNDNGEESSYSNGSSSSYNADKLSS. Over residues 17–34 the composition is skewed to acidic residues; that stretch reads EDQEPVTDNDMEYNDNGE. A compositionally biased stretch (low complexity) spans 35–47; the sequence is ESSYSNGSSSSYN. The region spanning 121-167 is the F-box domain; it reads RDFLSCLPVELGMKILHNLTGYDLLKVAQVSKNWKLISEIDKIWKSL. WD repeat units lie at residues 253 to 291, 294 to 333, 336 to 373, 376 to 415, 416 to 455, 461 to 498, and 501 to 539; these read GHED…VMYT, GHTG…LLHT, GHTS…HLAT, GHHA…RTLT, GHNN…GQEC, GHTS…CVHM, and GHRS…LIRD.

As to quaternary structure, probable component of the SCF(sel-10) E3 ubiquitin-protein ligase complex which includes skr-1 and F-box domain-containing protein sel-10 as a substrate recognition component. Interacts with fem-1, fem-2, and fem-3. Interacts with the intracellular domain of glp-1 and sel-12. Interacts with lin-12. Interacts with skr-1. Interacts with zyg-1. Expressed in tail and head neurons.

The protein localises to the cell projection. Its subcellular location is the axon. It is found in the cytoplasm. Probable substrate recognition component of SCF (SKP1-CUL-F-box protein) E3 ubiquitin-protein ligase complex, which mediates the ubiquitination and subsequent proteasomal degradation of target proteins. Regulates synapse elimination in early development in the motor neuron HSNL. Cell autonomous negative regulator of lin-12/Notch-mediated signaling, with respect to lin-12 activity in cell fate decisions and tumorigenesis. May target the intracellular domains of lin-12/Notch proteins for ubiquitin-dependent degradation. Involved in sex determination by promoting female development. Potential regulator of presenilin. May have a role in egg laying. Regulates zyg-1 levels (possibly redundantly with lin-23) to control centrosome duplication during mitosis. Negatively regulates lin-45 activity and protein stability, probably by targeting it for ubiquitination and proteasomal degradation. This chain is F-box/WD repeat-containing protein sel-10, found in Caenorhabditis elegans.